Here is a 395-residue protein sequence, read N- to C-terminus: Argininosuccinate synthase (395 aa).

Residues 9 to 17 (AYSGGLDTS) and A37 contribute to the ATP site. L-citrulline is bound by residues Y87 and S92. Residue G117 participates in ATP binding. L-aspartate is bound by residues T119, N123, and D124. Position 123 (N123) interacts with L-citrulline. Residues R127, S173, S182, E258, and Y270 each coordinate L-citrulline.

Belongs to the argininosuccinate synthase family. Type 1 subfamily. In terms of assembly, homotetramer.

The protein localises to the cytoplasm. The catalysed reaction is L-citrulline + L-aspartate + ATP = 2-(N(omega)-L-arginino)succinate + AMP + diphosphate + H(+). It participates in amino-acid biosynthesis; L-arginine biosynthesis; L-arginine from L-ornithine and carbamoyl phosphate: step 2/3. The polypeptide is Argininosuccinate synthase (Methanospirillum hungatei JF-1 (strain ATCC 27890 / DSM 864 / NBRC 100397 / JF-1)).